Consider the following 309-residue polypeptide: Ornithine carbamoyltransferase (309 aa).

Carbamoyl phosphate contacts are provided by residues 51-54, Gln-78, Arg-102, and 129-132; these read STRT and HPCQ. L-ornithine contacts are provided by residues Asn-161, Asp-225, and 229–230; that span reads SM. Carbamoyl phosphate is bound by residues 265–266 and Arg-293; that span reads CL.

It belongs to the aspartate/ornithine carbamoyltransferase superfamily. OTCase family.

The protein resides in the cytoplasm. The catalysed reaction is carbamoyl phosphate + L-ornithine = L-citrulline + phosphate + H(+). It participates in amino-acid biosynthesis; L-arginine biosynthesis; L-arginine from L-ornithine and carbamoyl phosphate: step 1/3. Functionally, reversibly catalyzes the transfer of the carbamoyl group from carbamoyl phosphate (CP) to the N(epsilon) atom of ornithine (ORN) to produce L-citrulline. The polypeptide is Ornithine carbamoyltransferase (Mycolicibacterium paratuberculosis (strain ATCC BAA-968 / K-10) (Mycobacterium paratuberculosis)).